Here is a 127-residue protein sequence, read N- to C-terminus: Mediator of RNA polymerase II transcription subunit 31 (127 aa).

This sequence belongs to the Mediator complex subunit 31 family. Component of the Mediator complex, which is composed of at least 21 subunits that form three structurally distinct submodules. The Mediator head module contains MED6, MED8, MED11, SRB4/MED17, SRB5/MED18, ROX3/MED19, SRB2/MED20 and SRB6/MED22, the middle module contains MED1, MED4, NUT1/MED5, MED7, CSE2/MED9, NUT2/MED10, SRB7/MED21 and SOH1/MED31, and the tail module contains MED2, PGD1/MED3, RGR1/MED14, GAL11/MED15 and SIN4/MED16. The head and the middle modules interact directly with RNA polymerase II, whereas the elongated tail module interacts with gene-specific regulatory proteins.

The protein localises to the nucleus. Component of the Mediator complex, a coactivator involved in the regulated transcription of nearly all RNA polymerase II-dependent genes. Mediator functions as a bridge to convey information from gene-specific regulatory proteins to the basal RNA polymerase II transcription machinery. The Mediator complex, having a compact conformation in its free form, is recruited to promoters by direct interactions with regulatory proteins and serves for the assembly of a functional preinitiation complex with RNA polymerase II and the general transcription factors. The Mediator complex unfolds to an extended conformation and partially surrounds RNA polymerase II, specifically interacting with the unphosphorylated form of the C-terminal domain (CTD) of RNA polymerase II. The Mediator complex dissociates from the RNA polymerase II holoenzyme and stays at the promoter when transcriptional elongation begins. This is Mediator of RNA polymerase II transcription subunit 31 (SOH1) from Saccharomyces cerevisiae (strain ATCC 204508 / S288c) (Baker's yeast).